Consider the following 225-residue polypeptide: 7-cyano-7-deazaguanine synthase (225 aa).

Residue 10–20 (FSGGQDSTTLA) coordinates ATP. Cys-190, Cys-205, Cys-208, and Cys-211 together coordinate Zn(2+).

Belongs to the QueC family. It depends on Zn(2+) as a cofactor.

It carries out the reaction 7-carboxy-7-deazaguanine + NH4(+) + ATP = 7-cyano-7-deazaguanine + ADP + phosphate + H2O + H(+). It participates in purine metabolism; 7-cyano-7-deazaguanine biosynthesis. Functionally, catalyzes the ATP-dependent conversion of 7-carboxy-7-deazaguanine (CDG) to 7-cyano-7-deazaguanine (preQ(0)). In Helicobacter pylori (strain J99 / ATCC 700824) (Campylobacter pylori J99), this protein is 7-cyano-7-deazaguanine synthase.